Consider the following 1007-residue polypeptide: Tolloid-like protein 1 (1007 aa).

The first 25 residues, 1–25, serve as a signal peptide directing secretion; it reads MNMPSWLIFLLTGWTFCGNFFACGG. The propeptide occupies 26 to 142; the sequence is LDYDYPNYEN…GKSKKIRIPR (117 aa). The segment at 115–139 is disordered; the sequence is SGQENTTANSQKVDNNQSGKSKKIR. Residues 116–133 are compositionally biased toward polar residues; sequence GQENTTANSQKVDNNQSG. One can recognise a Peptidase M12A domain in the interval 143 to 342; that stretch reads AATSRTERIW…AQARKLYRCP (200 aa). N164 carries an N-linked (GlcNAc...) asparagine glycan. 4 cysteine pairs are disulfide-bonded: C185/C341, C205/C227, C207/C208, and C344/C370. H235 is a binding site for Zn(2+). E236 is an active-site residue. Residues H239 and H245 each coordinate Zn(2+). 2 CUB domains span residues 344-456 and 457-569; these read CGET…YEAI and CGGE…FLKE. N-linked (GlcNAc...) asparagine glycans are attached at residues N354 and N385. Intrachain disulfides connect C397–C419, C457–C483, C510–C532, C573–C585, C581–C594, C596–C609, C613–C639, C666–C688, C729–C740, C736–C749, C751–C764, C769–C795, C822–C844, C882–C912, and C939–C961. Residues 569 to 610 form the EGF-like 1; calcium-binding domain; sequence EEDECARPDNGGCEQRCVNTLGSYKCSCDPGYELAPDKKSCE. The 113-residue stretch at 613-725 folds into the CUB 3 domain; it reads CGGLLTKLNG…KGFRAHFFSD (113 aa). A glycan (N-linked (GlcNAc...) asparagine) is linked at N621. One can recognise an EGF-like 2; calcium-binding domain in the interval 725 to 765; the sequence is DKDECSKDNGGCQHECINTIGSYVCQCRNGFVLHDNKHDCK. CUB domains lie at 769–881 and 882–998; these read CEHR…HSTE and CGGR…YRSV.

It depends on Zn(2+) as a cofactor.

It is found in the secreted. Functionally, protease which processes procollagen C-propeptides, such as chordin. Required for the embryonic development. Predominant protease, which in the development, influences dorsal-ventral patterning and skeletogenesis. The protein is Tolloid-like protein 1 (tll1) of Xenopus laevis (African clawed frog).